We begin with the raw amino-acid sequence, 179 residues long: Probable inosine/xanthosine triphosphatase (179 aa).

Residue 13-18 (STNPVK) coordinates substrate. A Mg(2+)-binding site is contributed by Q70.

The protein belongs to the YjjX NTPase family. In terms of assembly, homodimer. It depends on Mg(2+) as a cofactor. Requires Mn(2+) as cofactor.

It carries out the reaction XTP + H2O = XDP + phosphate + H(+). The enzyme catalyses ITP + H2O = IDP + phosphate + H(+). Phosphatase that hydrolyzes non-canonical purine nucleotides such as XTP and ITP to their respective diphosphate derivatives. Probably excludes non-canonical purines from DNA/RNA precursor pool, thus preventing their incorporation into DNA/RNA and avoiding chromosomal lesions. The chain is Probable inosine/xanthosine triphosphatase from Methanocaldococcus jannaschii (strain ATCC 43067 / DSM 2661 / JAL-1 / JCM 10045 / NBRC 100440) (Methanococcus jannaschii).